A 525-amino-acid chain; its full sequence is Alcohol O-acetyltransferase 1 (525 aa).

Positions 24 to 41 (GHARRMGSVEDLYVALNR) are membrane association. Residues His191 and Asp195 each act as charge relay system in the active site. The interval 508 to 525 (QESLEELCSIYKALLLGP) is membrane association.

This sequence belongs to the ATF1 alcohol acetyltransferase family.

Its subcellular location is the lipid droplet. The protein localises to the endoplasmic reticulum membrane. The enzyme catalyses an aliphatic alcohol + acetyl-CoA = an acetyl ester + CoA. It catalyses the reaction a fatty acyl-CoA + H2O = a fatty acid + CoA + H(+). It carries out the reaction 3-methylbutanol + acetyl-CoA = 3-methylbutyl acetate + CoA. Found to be inhibited by cadmium, copper, zinc and mercurium divalent cations and sulfhydryl reagents. Inhibited by the addition of unsaturated fatty acids to the culture. In terms of biological role, major alcohol O-acetyltransferase that uses acetyl-CoA to synthesize acetate esters from various alcohols, producing ethyl acetate, isoamyl acetate, isobutyl acetate, butyl acetate, hexyl acetate, heptyl acetate and octyl acetate. The alcohol acyltransferase activity is promiscuous with regard to alcohol but relatively specific for acetyl-CoA since ATF1 does not use any other acyl-CoAs (C3, C4, C5, C6, C8, C10, C12). Acts also as an efficient thioesterase in vitro with specificity towards medium-chain-length acyl-CoAs. In natural environments, the production of aromatic volatile metabolites promotes dispersal through insect vectors. This chain is Alcohol O-acetyltransferase 1, found in Saccharomyces cerevisiae (strain ATCC 204508 / S288c) (Baker's yeast).